The chain runs to 392 residues: Elongation factor Tu-3 (392 aa).

One can recognise a tr-type G domain in the interval 10 to 206 (KPHLNIGTMG…AVDTYVPMPE (197 aa)). Positions 19-26 (GHVDHGKT) are G1. Position 19-26 (19-26 (GHVDHGKT)) interacts with GTP. A Mg(2+)-binding site is contributed by T26. Residues 63–67 (GITIN) are G2. Residues 84–87 (DMPG) form a G3 region. Residues 84–88 (DMPGH) and 139–142 (NKAD) contribute to the GTP site. The tract at residues 139-142 (NKAD) is G4. The tract at residues 176-178 (SGL) is G5.

This sequence belongs to the TRAFAC class translation factor GTPase superfamily. Classic translation factor GTPase family. EF-Tu/EF-1A subfamily. In terms of assembly, monomer.

It localises to the cytoplasm. It catalyses the reaction GTP + H2O = GDP + phosphate + H(+). In terms of biological role, GTP hydrolase that promotes the GTP-dependent binding of aminoacyl-tRNA to the A-site of ribosomes during protein biosynthesis. This Streptomyces coelicolor (strain ATCC BAA-471 / A3(2) / M145) protein is Elongation factor Tu-3.